Reading from the N-terminus, the 738-residue chain is DNA repair and recombination protein RAD54-like (738 aa).

Residues 1–31 (MRRSLAPSQVAKRKQGPDSDDEEDWEPDMEP) are disordered. Residues 18–29 (DSDDEEDWEPDM) show a composition bias toward acidic residues. Residues 164–339 (GRRIENSYGC…FSLVHFVNSG (176 aa)) enclose the Helicase ATP-binding domain. 177–184 (DEMGLGKT) is a binding site for ATP. The DEAH box motif lies at 290 to 293 (DEGH). In terms of domain architecture, Helicase C-terminal spans 493–647 (LVLDYILAMT…CVVDEEQDVE (155 aa)). Residues S566 and S567 each carry the phosphoserine modification.

In terms of assembly, homohexamer. Interacts with RAD51. In terms of processing, phosphorylated. Phosphorylations at Ser-566 and Ser-567 allow efficient removal of RAD51 filaments from DNA.

It carries out the reaction ATP + H2O = ADP + phosphate + H(+). Its function is as follows. Plays an essential role in homologous recombination (HR) which is a major pathway for repairing DNA double-strand breaks (DSBs), single-stranded DNA (ssDNA) gaps, and stalled or collapsed replication forks. Acts as a molecular motor during the homology search and guides RAD51 ssDNA along a donor dsDNA thereby changing the homology search from the diffusion-based mechanism to a motor-guided mechanism. Also plays an essential role in RAD51-mediated synaptic complex formation which consists of three strands encased in a protein filament formed once homology is recognized. Once DNA strand exchange occured, dissociates RAD51 from nucleoprotein filaments formed on dsDNA. The sequence is that of DNA repair and recombination protein RAD54-like (rad54l) from Danio rerio (Zebrafish).